A 241-amino-acid chain; its full sequence is Sugar fermentation stimulation protein homolog (241 aa).

Belongs to the SfsA family.

The sequence is that of Sugar fermentation stimulation protein homolog from Nostoc sp. (strain PCC 7120 / SAG 25.82 / UTEX 2576).